A 308-amino-acid chain; its full sequence is Protein translocase subunit SecF (308 aa).

Helical transmembrane passes span 12–32 (YFIFSTFMILFSLFSIFTKGF), 127–147 (AKNALWALALGSILILIYITI), 152–172 (IYALSSVLALLHDVLVTIGFI), 182–202 (PFIAAILTILGYSMNDTIVIF), 234–254 (VYTSLTTLLALAALLIFGGST), and 262–282 (LLVGIVYGTYSSIWLASPLVY).

Belongs to the SecD/SecF family. SecF subfamily. Forms a complex with SecD. Part of the essential Sec protein translocation apparatus which comprises SecA, SecYEG and auxiliary proteins SecDF. Other proteins may also be involved.

It localises to the cell inner membrane. Its function is as follows. Part of the Sec protein translocase complex. Interacts with the SecYEG preprotein conducting channel. SecDF uses the proton motive force (PMF) to complete protein translocation after the ATP-dependent function of SecA. The protein is Protein translocase subunit SecF of Sebaldella termitidis (strain ATCC 33386 / NCTC 11300).